A 118-amino-acid polypeptide reads, in one-letter code: Fluoride-specific ion channel FluC 1 (118 aa).

The next 2 helical transmembrane spans lie at 5–25 and 47–67; these read FLLV…ISVL and FLLG…FLGT. Residues glycine 71 and threonine 74 each coordinate Na(+). The chain crosses the membrane as a helical span at residues 98 to 118; sequence YLGFTYVFGLIAAFLGMMLGV.

The protein belongs to the fluoride channel Fluc/FEX (TC 1.A.43) family.

It localises to the cell membrane. The enzyme catalyses fluoride(in) = fluoride(out). Its activity is regulated as follows. Na(+) is not transported, but it plays an essential structural role and its presence is essential for fluoride channel function. In terms of biological role, fluoride-specific ion channel. Important for reducing fluoride concentration in the cell, thus reducing its toxicity. This is Fluoride-specific ion channel FluC 1 from Listeria monocytogenes serovar 1/2a (strain ATCC BAA-679 / EGD-e).